A 335-amino-acid polypeptide reads, in one-letter code: CTD kinase subunit beta (335 aa).

2 Cyclin N-terminal domains span residues 26 to 151 and 158 to 241; these read ILST…CFDF and NYMV…LYMH. The interval 269–293 is disordered; it reads KNSGRPQKPPQIDPHSSSLADEYRE.

This sequence belongs to the cyclin family. In terms of assembly, CTDK-I consists of three subunits, ctk1/lsk1, ctk2/lsc1 and ctk3 (also called alpha, beta and gamma). Interacts with ctk1/lsk1. This interaction is dependent on ctk1/lsk1 kinase activity.

The protein resides in the cytoplasm. Its subcellular location is the nucleus. Its function is as follows. Cyclin subunit of the CTDK-I complex, which hyperphosphorylates the C-terminal heptapeptide repeat domain (CTD) of the largest RNA polymerase II subunit. As part of the CTDK-I complex, involved in RNA polymerase II transcriptional elongation and pre-mRNA 3'-end processing. Together with ctk3, required for ctk1/lsk1 CTD kinase activation. Together with ctk1/lsk1, required for the regulation of cytokinesis by phosphorylating 'Ser-2' residues found in the heptad repeats of the CTD. This Schizosaccharomyces pombe (strain 972 / ATCC 24843) (Fission yeast) protein is CTD kinase subunit beta (lsc1).